A 430-amino-acid chain; its full sequence is Serine--tRNA ligase (430 aa).

The segment at 103–127 is disordered; it reads LPNIPDDDVPDGRDENDNQEVSRWG. 237–239 provides a ligand contact to L-serine; sequence TAE. An ATP-binding site is contributed by 268-270; the sequence is RSE. Glu-291 is an L-serine binding site. 355-358 is an ATP binding site; sequence EISS. Position 391 (Ser-391) interacts with L-serine.

It belongs to the class-II aminoacyl-tRNA synthetase family. Type-1 seryl-tRNA synthetase subfamily. In terms of assembly, homodimer. The tRNA molecule binds across the dimer.

It is found in the cytoplasm. It catalyses the reaction tRNA(Ser) + L-serine + ATP = L-seryl-tRNA(Ser) + AMP + diphosphate + H(+). The enzyme catalyses tRNA(Sec) + L-serine + ATP = L-seryl-tRNA(Sec) + AMP + diphosphate + H(+). It participates in aminoacyl-tRNA biosynthesis; selenocysteinyl-tRNA(Sec) biosynthesis; L-seryl-tRNA(Sec) from L-serine and tRNA(Sec): step 1/1. Its function is as follows. Catalyzes the attachment of serine to tRNA(Ser). Is also able to aminoacylate tRNA(Sec) with serine, to form the misacylated tRNA L-seryl-tRNA(Sec), which will be further converted into selenocysteinyl-tRNA(Sec). The chain is Serine--tRNA ligase from Sodalis glossinidius (strain morsitans).